A 112-amino-acid polypeptide reads, in one-letter code: Ribonuclease P protein component (112 aa).

Belongs to the RnpA family. Consists of a catalytic RNA component (M1 or rnpB) and a protein subunit.

The catalysed reaction is Endonucleolytic cleavage of RNA, removing 5'-extranucleotides from tRNA precursor.. RNaseP catalyzes the removal of the 5'-leader sequence from pre-tRNA to produce the mature 5'-terminus. It can also cleave other RNA substrates such as 4.5S RNA. The protein component plays an auxiliary but essential role in vivo by binding to the 5'-leader sequence and broadening the substrate specificity of the ribozyme. The polypeptide is Ribonuclease P protein component (Mycoplasma mobile (strain ATCC 43663 / 163K / NCTC 11711) (Mesomycoplasma mobile)).